The following is a 471-amino-acid chain: MVEVEELEPLSPMDDEEEEISYDDLKRRMWKDRNLMEKKLKQQKRHSNDVVSFTTHRAEASRRKKMARSQDSVLKYMMKIMEVCKAKGFVYGIVPEKGKPITGSSDSLRRWWKENVQFDQNAPDAITDYLALAAAAAAAELIDKSSSSSSLLHMLQELQDTTLGSLLSALMQHCMPPQRRFPLEKGIAPPWWPTGTELWWGEQGAAHEHGAPPYRKPHDLRKSWKVSVLAAVIKHMSPNLGRVRRLARQSKSLQDKMMAKETDTWSRVLNQEEALLNIKDLKISEDQDDQESSGSKRKSESMEPSKSVYTCQNSSCPKSDVSFGFGDKNSRTGHEIQCLYGSNQEPSQSGEYTSSLLETVPSIVTNSTSEDDYYNVSSRALDKRDDDDHSINGNWMEYFWLEKMQQEFHCSRRFEDDEGTGTDFDQLTESDRSDNVNLNQLTKSDRSDNVNRSAFSVWDMGCEDKDIYMFD.

The interval 280–316 is disordered; sequence DLKISEDQDDQESSGSKRKSESMEPSKSVYTCQNSSC. Polar residues predominate over residues 304–316; it reads PSKSVYTCQNSSC.

It belongs to the EIN3 family.

It is found in the nucleus. Its function is as follows. Putative transcription factor that may be involved in the ethylene response pathway. The chain is Putative ETHYLENE INSENSITIVE 3-like 4 protein (EIL4) from Arabidopsis thaliana (Mouse-ear cress).